The sequence spans 323 residues: Ribosomal RNA small subunit methyltransferase H (323 aa).

Residues 44 to 46 (AGH), D64, Y91, D112, and Q119 contribute to the S-adenosyl-L-methionine site.

The protein belongs to the methyltransferase superfamily. RsmH family.

The protein localises to the cytoplasm. The enzyme catalyses cytidine(1402) in 16S rRNA + S-adenosyl-L-methionine = N(4)-methylcytidine(1402) in 16S rRNA + S-adenosyl-L-homocysteine + H(+). Its function is as follows. Specifically methylates the N4 position of cytidine in position 1402 (C1402) of 16S rRNA. The protein is Ribosomal RNA small subunit methyltransferase H of Nitratidesulfovibrio vulgaris (strain ATCC 29579 / DSM 644 / CCUG 34227 / NCIMB 8303 / VKM B-1760 / Hildenborough) (Desulfovibrio vulgaris).